Here is a 225-residue protein sequence, read N- to C-terminus: Ribosomal RNA small subunit methyltransferase G (225 aa).

S-adenosyl-L-methionine is bound by residues Gly89, Leu94, Ile140–Glu141, and Arg157.

Belongs to the methyltransferase superfamily. RNA methyltransferase RsmG family.

The protein localises to the cytoplasm. The enzyme catalyses guanosine(527) in 16S rRNA + S-adenosyl-L-methionine = N(7)-methylguanosine(527) in 16S rRNA + S-adenosyl-L-homocysteine. Its function is as follows. Specifically methylates the N7 position of guanine in position 527 of 16S rRNA. The protein is Ribosomal RNA small subunit methyltransferase G of Psychrobacter sp. (strain PRwf-1).